We begin with the raw amino-acid sequence, 162 residues long: Cytochrome c-type biogenesis protein CcmE (162 aa).

At 1–8 (MNPVRKKR) the chain is on the cytoplasmic side. The chain crosses the membrane as a helical; Signal-anchor for type II membrane protein span at residues 9–29 (LIIVLAIVAGVGAAVGLALSA). At 30–162 (LQQNINLFYT…GETSYNQEGK (133 aa)) the chain is on the periplasmic side. The heme site is built by H124 and Y128. A compositionally biased stretch (basic and acidic residues) spans 139–148 (DSGQLKHYEN). A disordered region spans residues 139–162 (DSGQLKHYENGKAAGETSYNQEGK).

It belongs to the CcmE/CycJ family.

The protein localises to the cell inner membrane. In terms of biological role, heme chaperone required for the biogenesis of c-type cytochromes. Transiently binds heme delivered by CcmC and transfers the heme to apo-cytochromes in a process facilitated by CcmF and CcmH. This is Cytochrome c-type biogenesis protein CcmE from Pseudomonas aeruginosa (strain ATCC 15692 / DSM 22644 / CIP 104116 / JCM 14847 / LMG 12228 / 1C / PRS 101 / PAO1).